We begin with the raw amino-acid sequence, 1101 residues long: Cytospin-A (1101 aa).

2 disordered regions span residues 1–170 (MRKA…NQIS) and 280–366 (SDCG…SGNA). Polar residues-rich tracts occupy residues 29–48 (ESSA…LSKA) and 64–86 (ASNS…TAMS). A compositionally biased stretch (low complexity) spans 93-110 (RSSAGSSSNTKRSGSSGA). Basic and acidic residues-rich tracts occupy residues 114-125 (GSSRERLRERSR) and 151-165 (GRTD…KSKS). A coiled-coil region spans residues 162–254 (KSKSDNQISD…LKDRLNALGF (93 aa)). Over residues 333 to 355 (LTSSDDALDAPSSSSESEGLPST) the composition is skewed to low complexity. Coiled-coil stretches lie at residues 373 to 427 (CLTE…MDSL) and 492 to 785 (QHLS…RGRV). The disordered stretch occupies residues 923-978 (SISVSRRSSEELKRDISVPDGSSAPSLMVMTSPSPQLSLSSSSPTASVTPTARSRI). The segment covering 929–939 (RSSEELKRDIS) has biased composition (basic and acidic residues). The span at 953-975 (TSPSPQLSLSSSSPTASVTPTAR) shows a compositional bias: low complexity. One can recognise a Calponin-homology (CH) domain in the interval 995–1100 (GSKRNALLKW…YVTSIYKYFE (106 aa)).

This sequence belongs to the cytospin-A family. As to quaternary structure, may interact with both microtubules and actin cytoskeleton.

It is found in the cytoplasm. The protein localises to the cytoskeleton. The protein resides in the spindle. Its subcellular location is the cell junction. It localises to the gap junction. Its function is as follows. Involved in cytokinesis and spindle organization. May play a role in actin cytoskeleton organization and microtubule stabilization and hence required for proper cell adhesion and migration. This Xenopus tropicalis (Western clawed frog) protein is Cytospin-A (specc1l).